Consider the following 235-residue polypeptide: Eukaryotic translation initiation factor 4E-1 (235 aa).

Residues 1–52 (MVVEDSMKATSAEDLSNSIANQNPRGRGGDEDEELEEGEIVGDDDLDSSNLS) are disordered. A compositionally biased stretch (polar residues) spans 13–24 (EDLSNSIANQNP). The span at 30–47 (DEDEELEEGEIVGDDDLD) shows a compositional bias: acidic residues. EIF4G-binding stretches follow at residues 60 to 63 (HPLE) and 70 to 106 (FDNPSAKSKQATWGASIRPIYTFSTVEEFWSVYNNIH). MRNA is bound by residues 78–83 (KQATWG), K110, and 128–129 (WE). A disulfide bridge links C133 with C171. An EIF4G-binding region spans residues 154 to 163 (YTLLAMIGEQ). Residues 178-183 (RSGQDK) and 223-227 (KKFDR) contribute to the mRNA site.

This sequence belongs to the eukaryotic initiation factor 4E family. As to quaternary structure, EIF4F is a multi-subunit complex, the composition of which varies with external and internal environmental conditions. It is composed of at least EIF4A, EIF4E and EIF4G. EIF4E is also known to interact with other partners. Interacts directly with eIF4G. In higher plants two isoforms of EIF4F have been identified, named isoform EIF4F and isoform EIF(iso)4F. Isoform EIF4F has subunits p220 and p26, whereas isoform EIF(iso)4F has subunits p82 and p28. (Microbial infection) Interacts with potyvirus viral genome-linked protein (VPg); this interaction is possible in susceptible hosts but impaired in resistant plants. In terms of processing, according to the redox status, the Cys-133-Cys-171 disulfide bridge may have a role in regulating protein function by affecting its ability to bind capped mRNA.

The protein resides in the nucleus. The protein localises to the cytoplasm. Its function is as follows. Component of the protein complex eIF4F, which is involved in the recognition of the mRNA cap, ATP-dependent unwinding of 5'-terminal secondary structure and recruitment of mRNA to the ribosome. Recognizes and binds the 7-methylguanosine-containing mRNA cap during an early step in the initiation of protein synthesis and facilitates ribosome binding by inducing the unwinding of the mRNAs secondary structures. Key component of recessive resistance to potyviruses and Tombusviridae genus Carmovirus such as melon necrotic spot virus (MNSV). Functionally, (Microbial infection) Susceptibility host factor required for viral infection by recruiting viral RNAs, including uncapped and non-polyadenylated RNA, to the host ribosomal complex via an interaction with viral genome-linked protein (VPg). The protein is Eukaryotic translation initiation factor 4E-1 of Cucumis melo (Muskmelon).